The chain runs to 116 residues: MSVKKETRLRRARKARLKMRELETVRLCVYRSSQHIYAQVIAADGGKVLASASTLDKDLREGATGNIDAAKKVGQLVAERAKAAGVTQVAFDRSGFKYHGRVKALADAAREGGLEF.

Belongs to the universal ribosomal protein uL18 family. As to quaternary structure, part of the 50S ribosomal subunit; part of the 5S rRNA/L5/L18/L25 subcomplex. Contacts the 5S and 23S rRNAs.

In terms of biological role, this is one of the proteins that bind and probably mediate the attachment of the 5S RNA into the large ribosomal subunit, where it forms part of the central protuberance. This Pseudomonas aeruginosa (strain UCBPP-PA14) protein is Large ribosomal subunit protein uL18.